The sequence spans 230 residues: Protein CWC15 homolog B (230 aa).

A disordered region spans residues 1–126; the sequence is MTTAARPTFE…DEDSDDDTAA (126 aa). Polar residues predominate over residues 22–34; sequence DLSQLSKQYSSRD. A compositionally biased stretch (basic and acidic residues) spans 52–84; the sequence is EEVRSRDFRRELEERERVAVRDKNRDRPTREHT. Over residues 102-124 the composition is skewed to acidic residues; sequence DADDPLTDEDADEDSDEDSDDDT. Residues 121–165 adopt a coiled-coil conformation; it reads DDDTAALLAELEKIKKERAEEQVRKELEQKAEEERIRMENILSGN.

This sequence belongs to the CWC15 family. As to quaternary structure, identified in the spliceosome C complex. Component of the minor spliceosome, which splices U12-type introns.

The protein resides in the nucleus. In terms of biological role, involved in pre-mRNA splicing as component of the spliceosome. The sequence is that of Protein CWC15 homolog B (cwc15-b) from Xenopus laevis (African clawed frog).